Consider the following 301-residue polypeptide: Recombination-associated protein RdgC (301 aa).

The protein belongs to the RdgC family.

The protein resides in the cytoplasm. Its subcellular location is the nucleoid. Functionally, may be involved in recombination. The chain is Recombination-associated protein RdgC from Xanthomonas oryzae pv. oryzae (strain MAFF 311018).